The sequence spans 188 residues: Elongation factor P (188 aa).

This sequence belongs to the elongation factor P family.

It localises to the cytoplasm. Its pathway is protein biosynthesis; polypeptide chain elongation. Involved in peptide bond synthesis. Stimulates efficient translation and peptide-bond synthesis on native or reconstituted 70S ribosomes in vitro. Probably functions indirectly by altering the affinity of the ribosome for aminoacyl-tRNA, thus increasing their reactivity as acceptors for peptidyl transferase. This chain is Elongation factor P, found in Caulobacter vibrioides (strain ATCC 19089 / CIP 103742 / CB 15) (Caulobacter crescentus).